A 1002-amino-acid chain; its full sequence is MKRSRLVPQHIFSIISKRYLAKHAYQKTLNLPKTKFPNRSNLEITLRELIPKSSQLVYKEQLRDFFEEFSKLNTTDEKLEFIKEKLFILHDGPPYANGELHLGHALNKILKDIINRYQLSQGKYIFYKPGWDCHGLPIEIKALKDLSAQQIESISPLKIRSMALKHAQKAIKRQRETFQHFAILTDWETPYLTMDKDYEINQLNIFKEMYERGLIKRQNKPVYWGTETRTALAEGELEYNENHKSIAAYVKFPLEKKSQMDLCKKLGITNNLPIYCLIWTSTPWTLLSNRAICFNQDFSYSLLRLNSELILVETGSIDKLGLTTNSFETIKQFQGTHLNGLYYQNLLVDDKVGRPLLHGAHVTSGTGTGLVHTAPGHGQDDYLIGIQNGLEIYSPVDHQGRYQLNELPQSVRSIVRDEGDLTKGRQVLDAETAKIILCKLSDLNLLYKSHEYTHSYPYDWRSKKPVIIRATPQWFADLHDVKNLALESISRVKFCPKRGYSRLSSFMKSRNEWCISRQRSWGIPILSFYKKSEPDSVLMNSEILAHAIEKIKQKGINAWFNDKDNDMKEWLPEKYHDVAHEYCRSQDTMDVWFDSGSSWSVIKDFYEKSLKLSKLPSPLYQVCLEGSDQHRGWFQSSLLTKVASSNVPVAPYEEVITHGFTLDENGLKMSKSVGNTISPEAIIRGDENLGLPALGVDGLRYLIAQSNFTTDIVAGPTVMKHVGEALKKVRLTFRYLLSNLQKSQDFNLLPIEQLRRVDQYTLYKINELLETTREHYQKYNFSKVLITLQYHLNNELSAFYFDISKDILYSNQISSLARRQVQTTLVHILNAYRAILAPILPVMVQEVWKYIPEGWLQGQEHIDINPMRGKWPFLDSNTEIVTSFENFELKILKQFQEEFKRLSLEEGVTKTTHSHVTIFTKHHLPFSSDELCDILQSSAVDILQMDDNNNSLPTIELGSGINVQILVERSKRHNCPRCWKANSAEEDKLCDRCKEAVDHLMS.

The short motif at 94–104 (PYANGELHLGH) is the 'HIGH' region element. The 'KMSKS' region motif lies at 668 to 672 (KMSKS). Lys671 is an ATP binding site.

It belongs to the class-I aminoacyl-tRNA synthetase family.

It is found in the mitochondrion matrix. The enzyme catalyses tRNA(Ile) + L-isoleucine + ATP = L-isoleucyl-tRNA(Ile) + AMP + diphosphate. In Saccharomyces cerevisiae (strain ATCC 204508 / S288c) (Baker's yeast), this protein is Isoleucine--tRNA ligase, mitochondrial (ISM1).